A 394-amino-acid polypeptide reads, in one-letter code: MSRIVLAEAYRTPIGVFGGVFKDIPAYELGATVIRQILEHSQIDPNEINEVILGNVLQAGQGQNPARIAAIHGGVPEAVPSFTVNKVCGSGLKAIQLAYQSIVAGDNEIVIAGGMESMSQSPMLLKNSRFGFKMGNQTLEDSMIADGLTDKFNDYHMGITAENLVEQYQISRKEQDQFAFDSQQKASRAQQAGVFDAEIVPVEVPQRKGDPLIISQDEGIRPQTTIDKLAQLRPAFKKDGSVTAGNASGINDGAAAMLVMTEDKAKALGLQPIAVLDSFGASGVAPSIMGIGPVEAIHKALKRSNKVINDVDIFELNEAFAAQSIAVNRELQLPQDKVNVNGGAIALGHPIGASGARTLVSLLHQLSDAKPTGVASLCIGGGQGIATVVSKYEV.

The active-site Acyl-thioester intermediate is the Cys-88. Residues His-349 and Cys-378 each act as proton acceptor in the active site.

This sequence belongs to the thiolase-like superfamily. Thiolase family.

It localises to the cytoplasm. It catalyses the reaction 2 acetyl-CoA = acetoacetyl-CoA + CoA. The polypeptide is Probable acetyl-CoA acyltransferase (Staphylococcus epidermidis (strain ATCC 35984 / DSM 28319 / BCRC 17069 / CCUG 31568 / BM 3577 / RP62A)).